Here is a 455-residue protein sequence, read N- to C-terminus: Chromosomal replication initiator protein DnaA (455 aa).

The segment at 1–74 (MSEQEIWEKV…LYEAIGHEIA (74 aa)) is domain I, interacts with DnaA modulators. The domain II stretch occupies residues 74 to 116 (APVFYTEEELKSLHTSEQKEENQPEQPAKKYTPGVDEAVIGGE). Over residues 85–95 (SLHTSEQKEEN) the composition is skewed to basic and acidic residues. Residues 85 to 104 (SLHTSEQKEENQPEQPAKKY) form a disordered region. Residues 117 to 333 (QFNTHNTFET…GALTRVLAFS (217 aa)) form a domain III, AAA+ region region. Gly-161, Gly-163, Lys-164, and Thr-165 together coordinate ATP. The segment at 334–455 (KLQGQPITTE…ENLEKEIRNQ (122 aa)) is domain IV, binds dsDNA.

This sequence belongs to the DnaA family. Oligomerizes as a right-handed, spiral filament on DNA at oriC.

The protein resides in the cytoplasm. In terms of biological role, plays an essential role in the initiation and regulation of chromosomal replication. ATP-DnaA binds to the origin of replication (oriC) to initiate formation of the DNA replication initiation complex once per cell cycle. Binds the DnaA box (a 9 base pair repeat at the origin) and separates the double-stranded (ds)DNA. Forms a right-handed helical filament on oriC DNA; dsDNA binds to the exterior of the filament while single-stranded (ss)DNA is stabiized in the filament's interior. The ATP-DnaA-oriC complex binds and stabilizes one strand of the AT-rich DNA unwinding element (DUE), permitting loading of DNA polymerase. After initiation quickly degrades to an ADP-DnaA complex that is not apt for DNA replication. Binds acidic phospholipids. The sequence is that of Chromosomal replication initiator protein DnaA from Staphylococcus saprophyticus subsp. saprophyticus (strain ATCC 15305 / DSM 20229 / NCIMB 8711 / NCTC 7292 / S-41).